Consider the following 853-residue polypeptide: Envelope glycoprotein gp160 (853 aa).

An N-terminal signal peptide occupies residues 1-32 (MRVKEKYQHLWRWGWKWGIMLLGILMICSATE). The Extracellular segment spans residues 33 to 682 (NLWVTVYYGV…ITNWLWYIKI (650 aa)). The cysteines at positions 54 and 74 are disulfide-linked. Residues asparagine 88, asparagine 136, asparagine 141, asparagine 156, asparagine 160, asparagine 186, asparagine 195, asparagine 232, asparagine 239, asparagine 260, asparagine 274, asparagine 287, asparagine 293, asparagine 299, asparagine 330, and asparagine 354 are each glycosylated (N-linked (GlcNAc...) asparagine; by host). Cystine bridges form between cysteine 119-cysteine 203, cysteine 126-cysteine 194, cysteine 131-cysteine 157, cysteine 216-cysteine 245, and cysteine 226-cysteine 237. Positions 131–156 (CTDLKNDTNTNSSNGRMIMEKGEIKN) are V1. The segment at 157–194 (CSFNISTSIRNKVQKEYAFFYKLDIRPIDNTTYRLISC) is V2. The interval 294–328 (CTRPNNNTRKSIRIQRGPGRAFVTIGKIGNMRQAH) is V3. A disulfide bridge connects residues cysteine 294 and cysteine 329. The interval 362 to 372 (SSGGDPEIVTH) is CD4-binding loop. 2 cysteine pairs are disulfide-bonded: cysteine 376-cysteine 443 and cysteine 383-cysteine 416. The tract at residues 383-416 (CNSTQLFNSTWFNSTWSTEGSNNTEGSDTITLPC) is V4. N-linked (GlcNAc...) asparagine; by host glycans are attached at residues asparagine 384, asparagine 390, asparagine 395, asparagine 404, asparagine 446, and asparagine 461. V5 stretches follow at residues 459–469 (NTNESEVFRPG) and 461–469 (NESEVFRPG). Residues 510 to 530 (AVGIGALFLGFLGAAGSTMGA) are fusion peptide. Residues 572–590 (KQLQARILAVERYLKDQQL) form an immunosuppression region. A disulfide bridge connects residues cysteine 596 and cysteine 602. Residues asparagine 609, asparagine 614, asparagine 623, asparagine 635, and asparagine 672 are each glycosylated (N-linked (GlcNAc...) asparagine; by host). A coiled-coil region spans residues 631–665 (REINNYTSLIHSLIDESQNQQEKNEQELLELDKWA). Positions 660–681 (ELDKWASLWNWFNITNWLWYIK) are MPER; binding to GalCer. Residues 683-703 (FIMIVGGLVGLRIVFAVLSIV) traverse the membrane as a helical segment. Topologically, residues 704–853 (NRVRQGYSPL…RIRQGLERIL (150 aa)) are cytoplasmic. A YXXL motif; contains endocytosis signal motif is present at residues 710 to 713 (YSPL). The tract at residues 717–741 (THLPNRGGPDRPEGIEEEGGERDRD) is disordered. Residue cysteine 762 is the site of S-palmitoyl cysteine; by host attachment.

The protein belongs to the HIV-1 env protein family. As to quaternary structure, the mature envelope protein (Env) consists of a homotrimer of non-covalently associated gp120-gp41 heterodimers. The resulting complex protrudes from the virus surface as a spike. There seems to be as few as 10 spikes on the average virion. Interacts with host CD4, CCR5 and CXCR4. Gp120 also interacts with the C-type lectins CD209/DC-SIGN and CLEC4M/DC-SIGNR (collectively referred to as DC-SIGN(R)). Gp120 and gp41 interact with GalCer. Gp120 interacts with host ITGA4/ITGB7 complex; on CD4+ T-cells, this interaction results in rapid activation of integrin ITGAL/LFA-1, which facilitates efficient cell-to-cell spreading of HIV-1. Gp120 interacts with cell-associated heparan sulfate; this interaction increases virus infectivity on permissive cells and may be involved in infection of CD4- cells. The mature envelope protein (Env) consists of a homotrimer of non-covalently associated gp120-gp41 heterodimers. The resulting complex protrudes from the virus surface as a spike. There seems to be as few as 10 spikes on the average virion. In terms of processing, highly glycosylated by host. The high number of glycan on the protein is reffered to as 'glycan shield' because it contributes to hide protein sequence from adaptive immune system. Post-translationally, palmitoylation of the transmembrane protein and of Env polyprotein (prior to its proteolytic cleavage) is essential for their association with host cell membrane lipid rafts. Palmitoylation is therefore required for envelope trafficking to classical lipid rafts, but not for viral replication. Specific enzymatic cleavages in vivo yield mature proteins. Envelope glycoproteins are synthesized as an inactive precursor that is heavily N-glycosylated and processed likely by host cell furin in the Golgi to yield the mature SU and TM proteins. The cleavage site between SU and TM requires the minimal sequence [KR]-X-[KR]-R. About 2 of the 9 disulfide bonds of gp41 are reduced by P4HB/PDI, following binding to CD4 receptor.

It is found in the virion membrane. It localises to the host cell membrane. The protein resides in the host endosome membrane. Oligomerizes in the host endoplasmic reticulum into predominantly trimers. In a second time, gp160 transits in the host Golgi, where glycosylation is completed. The precursor is then proteolytically cleaved in the trans-Golgi and thereby activated by cellular furin or furin-like proteases to produce gp120 and gp41. Its function is as follows. Attaches the virus to the host lymphoid cell by binding to the primary receptor CD4. This interaction induces a structural rearrangement creating a high affinity binding site for a chemokine coreceptor like CXCR4 and/or CCR5. Acts as a ligand for CD209/DC-SIGN and CLEC4M/DC-SIGNR, which are respectively found on dendritic cells (DCs), and on endothelial cells of liver sinusoids and lymph node sinuses. These interactions allow capture of viral particles at mucosal surfaces by these cells and subsequent transmission to permissive cells. HIV subverts the migration properties of dendritic cells to gain access to CD4+ T-cells in lymph nodes. Virus transmission to permissive T-cells occurs either in trans (without DCs infection, through viral capture and transmission), or in cis (following DCs productive infection, through the usual CD4-gp120 interaction), thereby inducing a robust infection. In trans infection, bound virions remain infectious over days and it is proposed that they are not degraded, but protected in non-lysosomal acidic organelles within the DCs close to the cell membrane thus contributing to the viral infectious potential during DCs' migration from the periphery to the lymphoid tissues. On arrival at lymphoid tissues, intact virions recycle back to DCs' cell surface allowing virus transmission to CD4+ T-cells. In terms of biological role, acts as a class I viral fusion protein. Under the current model, the protein has at least 3 conformational states: pre-fusion native state, pre-hairpin intermediate state, and post-fusion hairpin state. During fusion of viral and target intracellular membranes, the coiled coil regions (heptad repeats) assume a trimer-of-hairpins structure, positioning the fusion peptide in close proximity to the C-terminal region of the ectodomain. The formation of this structure appears to drive apposition and subsequent fusion of viral and target cell membranes. Complete fusion occurs in host cell endosomes and is dynamin-dependent, however some lipid transfer might occur at the plasma membrane. The virus undergoes clathrin-dependent internalization long before endosomal fusion, thus minimizing the surface exposure of conserved viral epitopes during fusion and reducing the efficacy of inhibitors targeting these epitopes. Membranes fusion leads to delivery of the nucleocapsid into the cytoplasm. This chain is Envelope glycoprotein gp160, found in Human immunodeficiency virus type 1 group M subtype B (isolate MFA) (HIV-1).